The primary structure comprises 313 residues: Ribosomal protein L11 methyltransferase (313 aa).

The S-adenosyl-L-methionine site is built by T164, G185, D207, and N249.

This sequence belongs to the methyltransferase superfamily. PrmA family.

Its subcellular location is the cytoplasm. It catalyses the reaction L-lysyl-[protein] + 3 S-adenosyl-L-methionine = N(6),N(6),N(6)-trimethyl-L-lysyl-[protein] + 3 S-adenosyl-L-homocysteine + 3 H(+). Methylates ribosomal protein L11. This Clostridium botulinum (strain Eklund 17B / Type B) protein is Ribosomal protein L11 methyltransferase.